The following is a 206-amino-acid chain: Dephospho-CoA kinase (206 aa).

The 197-residue stretch at Thr-4–Phe-200 folds into the DPCK domain. Gly-12–Thr-17 serves as a coordination point for ATP.

This sequence belongs to the CoaE family.

The protein localises to the cytoplasm. The enzyme catalyses 3'-dephospho-CoA + ATP = ADP + CoA + H(+). It participates in cofactor biosynthesis; coenzyme A biosynthesis; CoA from (R)-pantothenate: step 5/5. In terms of biological role, catalyzes the phosphorylation of the 3'-hydroxyl group of dephosphocoenzyme A to form coenzyme A. The protein is Dephospho-CoA kinase of Salmonella paratyphi A (strain ATCC 9150 / SARB42).